We begin with the raw amino-acid sequence, 29 residues long: uncharacterized protein (29 aa).

The chain crosses the membrane as a helical span at residues 8–28 (FALIVVLFILLIIVGTAFVGG).

Belongs to the SscA family.

The protein resides in the membrane. This is an uncharacterized protein from Bacillus subtilis (strain 168).